Reading from the N-terminus, the 295-residue chain is Protoheme IX farnesyltransferase 2 (295 aa).

Helical transmembrane passes span 9–29 (ITKP…FFLA), 36–56 (FALF…GCVF), 83–103 (LPLA…LLYV), 108–128 (LSAF…SLWL), 135–155 (GTLV…CAVS), 163–183 (VTLL…IAIF), 209–229 (IVLY…GGYA), 230–250 (GLGY…MAWG), and 264–284 (VFGF…VDSQ).

Belongs to the UbiA prenyltransferase family. Protoheme IX farnesyltransferase subfamily.

Its subcellular location is the cell inner membrane. It carries out the reaction heme b + (2E,6E)-farnesyl diphosphate + H2O = Fe(II)-heme o + diphosphate. It participates in porphyrin-containing compound metabolism; heme O biosynthesis; heme O from protoheme: step 1/1. Its function is as follows. Converts heme B (protoheme IX) to heme O by substitution of the vinyl group on carbon 2 of heme B porphyrin ring with a hydroxyethyl farnesyl side group. The sequence is that of Protoheme IX farnesyltransferase 2 from Pseudomonas putida (strain GB-1).